We begin with the raw amino-acid sequence, 115 residues long: NADH-ubiquinone oxidoreductase chain 3 (115 aa).

The next 3 membrane-spanning stretches (helical) occupy residues 3–23, 55–75, and 84–104; these read LMLALTVNTLLTALLTIIMFW, FFLVAITFLLFDLEIALLLSL, and LPTMIKTSIMFITILALSLAY.

This sequence belongs to the complex I subunit 3 family. In terms of assembly, core subunit of respiratory chain NADH dehydrogenase (Complex I) which is composed of 45 different subunits. Interacts with TMEM186. Interacts with TMEM242.

The protein resides in the mitochondrion inner membrane. The catalysed reaction is a ubiquinone + NADH + 5 H(+)(in) = a ubiquinol + NAD(+) + 4 H(+)(out). In terms of biological role, core subunit of the mitochondrial membrane respiratory chain NADH dehydrogenase (Complex I) which catalyzes electron transfer from NADH through the respiratory chain, using ubiquinone as an electron acceptor. Essential for the catalytic activity of complex I. The protein is NADH-ubiquinone oxidoreductase chain 3 of Papio hamadryas (Hamadryas baboon).